Here is a 347-residue protein sequence, read N- to C-terminus: MNPLALSLILTTLLAGTLITMMSSHWLTAWMGLEMNMLTMIPILMKTTNPRSTEAATKYFMTQAMASMMLMMALTINLMYSGQWSITKMTNPVASNMALMALMTKLGSAPFHFWVPEVTQGVELTPGMILLTWQKLAPLSLLYQMATYTNTNLIYLSGLLSILIGGWGGLNQTQLRKILAYSSISHMGWMLIILPFNPTLTLLNLTIYIMLTLSIFMILTNTFTTSMSSLTLMWNKTPAMTIMLMTTLLSLGGLPPLSGFMPKWLMIHELTKNNSIIMPLTMAIMALLNMYFYMRLIYYSSLTILPSTNNMKMTWRFTNTKHTMTLPTLITLSNMLLPLTPMISMLE.

9 helical membrane passes run 3–23, 59–79, 93–115, 150–170, 178–198, 199–219, 242–262, 274–294, and 326–346; these read PLAL…TMMS, YFMT…INLM, VASN…HFWV, NTNL…WGGL, ILAY…PFNP, TLTL…FMIL, IMLM…GFMP, NSII…YFYM, and LPTL…ISML.

This sequence belongs to the complex I subunit 2 family. Core subunit of respiratory chain NADH dehydrogenase (Complex I) which is composed of 45 different subunits. Interacts with TMEM242.

It localises to the mitochondrion inner membrane. The enzyme catalyses a ubiquinone + NADH + 5 H(+)(in) = a ubiquinol + NAD(+) + 4 H(+)(out). In terms of biological role, core subunit of the mitochondrial membrane respiratory chain NADH dehydrogenase (Complex I) which catalyzes electron transfer from NADH through the respiratory chain, using ubiquinone as an electron acceptor. Essential for the catalytic activity and assembly of complex I. This is NADH-ubiquinone oxidoreductase chain 2 from Loxodonta africana (African elephant).